The primary structure comprises 36 residues: Photosystem I reaction center subunit VIII (36 aa).

The helical transmembrane segment at 6-28 threads the bilayer; that stretch reads LPSIFVPLVGLLFPAIAMVSLFF.

It belongs to the PsaI family.

The protein localises to the plastid. Its subcellular location is the chloroplast thylakoid membrane. Functionally, may help in the organization of the PsaL subunit. The chain is Photosystem I reaction center subunit VIII from Nymphaea alba (White water-lily).